The primary structure comprises 709 residues: Ribosomal RNA large subunit methyltransferase K/L (709 aa).

Positions leucine 43 to phenylalanine 154 constitute a THUMP domain.

Belongs to the methyltransferase superfamily. RlmKL family.

It localises to the cytoplasm. The enzyme catalyses guanosine(2445) in 23S rRNA + S-adenosyl-L-methionine = N(2)-methylguanosine(2445) in 23S rRNA + S-adenosyl-L-homocysteine + H(+). It catalyses the reaction guanosine(2069) in 23S rRNA + S-adenosyl-L-methionine = N(2)-methylguanosine(2069) in 23S rRNA + S-adenosyl-L-homocysteine + H(+). In terms of biological role, specifically methylates the guanine in position 2445 (m2G2445) and the guanine in position 2069 (m7G2069) of 23S rRNA. The polypeptide is Ribosomal RNA large subunit methyltransferase K/L (Shewanella baltica (strain OS185)).